The following is a 364-amino-acid chain: DNA polymerase IV (364 aa).

The UmuC domain maps to 14-198; it reads IIHIDMDAFF…LPIEKFHGVG (185 aa). The Mg(2+) site is built by Asp18 and Asp116. Residue Glu117 is part of the active site.

This sequence belongs to the DNA polymerase type-Y family. Monomer. Mg(2+) is required as a cofactor.

The protein resides in the cytoplasm. It carries out the reaction DNA(n) + a 2'-deoxyribonucleoside 5'-triphosphate = DNA(n+1) + diphosphate. In terms of biological role, poorly processive, error-prone DNA polymerase involved in untargeted mutagenesis. Copies undamaged DNA at stalled replication forks, which arise in vivo from mismatched or misaligned primer ends. These misaligned primers can be extended by PolIV. Exhibits no 3'-5' exonuclease (proofreading) activity. May be involved in translesional synthesis, in conjunction with the beta clamp from PolIII. This chain is DNA polymerase IV, found in Streptococcus pyogenes serotype M5 (strain Manfredo).